A 306-amino-acid chain; its full sequence is L-lactate dehydrogenase (306 aa).

Residues V11, D32, K37, and 76–77 contribute to the NAD(+) site; that span reads GA. 2 residues coordinate substrate: Q79 and R85. Residues S98, 115–117, and S140 contribute to the NAD(+) site; that span reads VSN. A substrate-binding site is contributed by 117–120; it reads NPVD. A substrate-binding site is contributed by 145 to 148; it reads DTAR. R150 and H165 together coordinate beta-D-fructose 1,6-bisphosphate. Residue H172 is the Proton acceptor of the active site. Y214 carries the post-translational modification Phosphotyrosine. T223 contacts substrate.

Belongs to the LDH/MDH superfamily. LDH family. Homotetramer.

The protein resides in the cytoplasm. The catalysed reaction is (S)-lactate + NAD(+) = pyruvate + NADH + H(+). The protein operates within fermentation; pyruvate fermentation to lactate; (S)-lactate from pyruvate: step 1/1. With respect to regulation, allosterically activated by fructose 1,6-bisphosphate (FBP). Functionally, catalyzes the conversion of lactate to pyruvate. The sequence is that of L-lactate dehydrogenase from Synechococcus sp. (strain JA-3-3Ab) (Cyanobacteria bacterium Yellowstone A-Prime).